A 394-amino-acid polypeptide reads, in one-letter code: Elongation factor Tu (394 aa).

Positions 10–204 (KPHVNVGTIG…ALDRYIPTPE (195 aa)) constitute a tr-type G domain. A G1 region spans residues 19–26 (GHVDHGKT). 19 to 26 (GHVDHGKT) provides a ligand contact to GTP. Thr-26 contributes to the Mg(2+) binding site. The tract at residues 60 to 64 (GITIN) is G2. A G3 region spans residues 81–84 (DCPG). Residues 81 to 85 (DCPGH) and 136 to 139 (NKCD) contribute to the GTP site. A G4 region spans residues 136–139 (NKCD). The tract at residues 174 to 176 (SAL) is G5.

This sequence belongs to the TRAFAC class translation factor GTPase superfamily. Classic translation factor GTPase family. EF-Tu/EF-1A subfamily. Monomer.

The protein resides in the cytoplasm. The catalysed reaction is GTP + H2O = GDP + phosphate + H(+). In terms of biological role, GTP hydrolase that promotes the GTP-dependent binding of aminoacyl-tRNA to the A-site of ribosomes during protein biosynthesis. The sequence is that of Elongation factor Tu from Neisseria gonorrhoeae.